Consider the following 440-residue polypeptide: UPF0761 membrane protein Rru_A2625 (440 aa).

Helical transmembrane passes span 29-49 (ILAT…THDI), 61-81 (LLAL…FPGF), 117-137 (GLTA…LLTI), 157-177 (LLVY…SFSL), 201-221 (PTLG…MLVP), 224-244 (PVPL…SALL), and 264-284 (ALAA…VVLM).

The protein belongs to the UPF0761 family.

It localises to the cell inner membrane. This Rhodospirillum rubrum (strain ATCC 11170 / ATH 1.1.1 / DSM 467 / LMG 4362 / NCIMB 8255 / S1) protein is UPF0761 membrane protein Rru_A2625.